Reading from the N-terminus, the 350-residue chain is MPEVQLRNNWKREEIEALFALPMNDLLFQAHSIHRQEFDPNEVQVSRLLSIKTGACPEDCKYCPQSARYDTGLEKERLLAMETVLTEARSAKAAGASRFCMGAAWRNPKERDMPYLKTMVEEVKALGMETCMTLGMLSAEQANTLADAGLDYYNHNLDTSPEYYGDVITTRTYQSRLDTLTNVRASGMKVCSGGIVGMGEKATDRAGLIQQLANLEQHPDSVPINMLVKVEGTPFEKLDDLDPLEFVRTIAVARITMPKSRVRLSAGRENMSDELQAMCFFAGANSIFYGCKLLTTPNPEENDDMSLFKRLGLHPEQGIAATKEQDEAMLAKAAAHQDKKSAAFYDAGAL.

Residues 41–268 (NEVQVSRLLS…KSRVRLSAGR (228 aa)) enclose the Radical SAM core domain. Residues C56, C60, and C63 each contribute to the [4Fe-4S] cluster site. 4 residues coordinate [2Fe-2S] cluster: C100, C131, C191, and R263.

It belongs to the radical SAM superfamily. Biotin synthase family. As to quaternary structure, homodimer. [4Fe-4S] cluster is required as a cofactor. Requires [2Fe-2S] cluster as cofactor.

It carries out the reaction (4R,5S)-dethiobiotin + (sulfur carrier)-SH + 2 reduced [2Fe-2S]-[ferredoxin] + 2 S-adenosyl-L-methionine = (sulfur carrier)-H + biotin + 2 5'-deoxyadenosine + 2 L-methionine + 2 oxidized [2Fe-2S]-[ferredoxin]. The protein operates within cofactor biosynthesis; biotin biosynthesis; biotin from 7,8-diaminononanoate: step 2/2. In terms of biological role, catalyzes the conversion of dethiobiotin (DTB) to biotin by the insertion of a sulfur atom into dethiobiotin via a radical-based mechanism. The protein is Biotin synthase of Shewanella pealeana (strain ATCC 700345 / ANG-SQ1).